We begin with the raw amino-acid sequence, 671 residues long: DNA ligase (671 aa).

NAD(+) contacts are provided by residues 35 to 39, 84 to 85, and E113; these read DQQYD and SL. The active-site N6-AMP-lysine intermediate is the K115. NAD(+) is bound by residues R136, E170, K285, and K309. C403, C406, C421, and C426 together coordinate Zn(2+). Residues 588–671 enclose the BRCT domain; sequence TTQTIFTNKK…QIIENSQIKL (84 aa).

The protein belongs to the NAD-dependent DNA ligase family. LigA subfamily. Mg(2+) is required as a cofactor. Requires Mn(2+) as cofactor.

The catalysed reaction is NAD(+) + (deoxyribonucleotide)n-3'-hydroxyl + 5'-phospho-(deoxyribonucleotide)m = (deoxyribonucleotide)n+m + AMP + beta-nicotinamide D-nucleotide.. DNA ligase that catalyzes the formation of phosphodiester linkages between 5'-phosphoryl and 3'-hydroxyl groups in double-stranded DNA using NAD as a coenzyme and as the energy source for the reaction. It is essential for DNA replication and repair of damaged DNA. The polypeptide is DNA ligase (Onion yellows phytoplasma (strain OY-M)).